Here is a 91-residue protein sequence, read N- to C-terminus: Probable Thioredoxin (91 aa).

The 91-residue stretch at 1–91 (MVMMKLFTSP…LKGGEEYGAS (91 aa)) folds into the Glutaredoxin domain. Cysteine 12 and cysteine 15 are disulfide-bonded.

Belongs to the glutaredoxin family.

The protein resides in the cytoplasm. In terms of biological role, acts to maintain redox homeostasis; functions as a protein disulfide reductase. This is Probable Thioredoxin from Archaeoglobus fulgidus (strain ATCC 49558 / DSM 4304 / JCM 9628 / NBRC 100126 / VC-16).